A 729-amino-acid chain; its full sequence is Polyphosphate kinase (729 aa).

The tract at residues 1–46 (MTEAQTRTEPSESSESSEAVAPAITSAADSAPEAPPATTAPAIENP) is disordered. The span at 25 to 42 (TSAADSAPEAPPATTAPA) shows a compositional bias: low complexity. An ATP-binding site is contributed by asparagine 90. Positions 422 and 452 each coordinate Mg(2+). The active-site Phosphohistidine intermediate is histidine 482. Residues tyrosine 515, arginine 611, and histidine 639 each coordinate ATP.

The protein belongs to the polyphosphate kinase 1 (PPK1) family. The cofactor is Mg(2+). An intermediate of this reaction is the autophosphorylated ppk in which a phosphate is covalently linked to a histidine residue through a N-P bond.

It catalyses the reaction [phosphate](n) + ATP = [phosphate](n+1) + ADP. In terms of biological role, catalyzes the reversible transfer of the terminal phosphate of ATP to form a long-chain polyphosphate (polyP). The chain is Polyphosphate kinase from Mycolicibacterium gilvum (strain PYR-GCK) (Mycobacterium gilvum (strain PYR-GCK)).